Consider the following 487-residue polypeptide: Sorting nexin-4 (487 aa).

The tract at residues Met1–Asp59 is disordered. Positions Ser20 to Ser32 are enriched in polar residues. Residues Val70–Ala192 form the PX domain. 4 residues coordinate a 1,2-diacyl-sn-glycero-3-phospho-(1D-myo-inositol-3-phosphate): Arg113, Thr115, Lys139, and Arg158. A coiled-coil region spans residues Glu395–Val430.

It belongs to the sorting nexin family.

The protein resides in the cytoplasm. It localises to the cytosol. The protein localises to the preautophagosomal structure membrane. It is found in the endosome membrane. Its function is as follows. Sorting nexin, involved in the separation or division of vacuoles throughout the entire life cycle of the cells. Involved in retrieval of late-Golgi SNAREs from post-Golgi endosomes to the trans-Golgi network, for cytoplasm to vacuole transport (Cvt), and autophagy of large cargos including mitophagy, pexophagy and glycophagy. This is Sorting nexin-4 (snx4) from Emericella nidulans (strain FGSC A4 / ATCC 38163 / CBS 112.46 / NRRL 194 / M139) (Aspergillus nidulans).